We begin with the raw amino-acid sequence, 812 residues long: DNA replication licensing factor MCM3 (812 aa).

At Ala-2 the chain carries N-acetylalanine. Ser-160 carries the post-translational modification Phosphoserine. Residue Lys-293 is modified to N6-acetyllysine. Residues 295 to 502 (VFEQLARSLA…QDREISDHVL (208 aa)) enclose the MCM domain. ADP contacts are provided by Gln-353, Leu-393, Glu-394, Ala-395, and Ala-397. The Arginine finger motif lies at 477 to 480 (SRFD). An N6-acetyllysine modification is found at Lys-547. Ser-611 carries the phosphoserine modification. Arg-664 provides a ligand contact to ATP. The interval 664 to 744 (RKKASEDESD…TQDSQKVELS (81 aa)) is disordered. A phosphoserine mark is found at Ser-668, Ser-672, and Ser-681. Residues 670-681 (DESDLEDEEEKS) are compositionally biased toward acidic residues. Tyr-705 bears the Phosphotyrosine mark. Residue Ser-708 is modified to Phosphoserine. Thr-719, Thr-722, and Thr-729 each carry phosphothreonine. Residues 720-744 (PKTDDSQEKTDDSQETQDSQKVELS) show a composition bias toward basic and acidic residues. 2 positions are modified to phosphoserine: Ser-732 and Ser-738.

The protein belongs to the MCM family. As to quaternary structure, component of the MCM2-7 complex. The complex forms a toroidal hexameric ring with the proposed subunit order MCM2-MCM6-MCM4-MCM7-MCM3-MCM5. Component of the CMG helicase complex, a hexameric ring of related MCM2-7 subunits stabilized by CDC45 and the tetrameric GINS complex. Associated with the replication-specific DNA polymerase alpha. Interacts with MCMBP. Interacts with ANKRD17. Interacts with MCM3AP; this interaction leads to MCM3 acetylation. In terms of processing, acetylated by MCM3AP. O-glycosylated (O-GlcNAcylated), in a cell cycle-dependent manner.

Its subcellular location is the nucleus. The protein resides in the chromosome. The enzyme catalyses ATP + H2O = ADP + phosphate + H(+). Acts as a component of the MCM2-7 complex (MCM complex) which is the replicative helicase essential for 'once per cell cycle' DNA replication initiation and elongation in eukaryotic cells. Core component of CDC45-MCM-GINS (CMG) helicase, the molecular machine that unwinds template DNA during replication, and around which the replisome is built. The active ATPase sites in the MCM2-7 ring are formed through the interaction surfaces of two neighboring subunits such that a critical structure of a conserved arginine finger motif is provided in trans relative to the ATP-binding site of the Walker A box of the adjacent subunit. The six ATPase active sites, however, are likely to contribute differentially to the complex helicase activity. Required for the entry in S phase and for cell division. In Mus musculus (Mouse), this protein is DNA replication licensing factor MCM3 (Mcm3).